The sequence spans 393 residues: MSGAAKTGDRVRTVYLIATEESGDRLGAALMRELRARLGSKVRFAGVGGHCMAGEGLASLFPIEELSIIGFAAVVQRLPMILKLIRRAVDAVLTAKPDILVIIDSPDFTHRVARRVRQRDPSIPIVDYVSPTVWAWRPGRARAMLGYVDHVLALLPFEPAEYRRLQGPPCSYVGHPLTEQFGSLRPDAAEQARREASPPVLLVLPGSRRSEVRHHAAAFGDTLARLKHEGVAFEAVLPTTPHLEGLVRAAVASWEVQPRIVVGEQDKRAAFRIAHAALAKSGTVTLELAIAGVPMVTAYRAGSVEIWIARRVVRPGTVILANLVMGDDVIPEFIQEDCVPDKLVPAVRDLLGNTPARRRQLAGFAKIDDILSTGEQTPSGRAADIVLDVMRHA.

The protein belongs to the LpxB family.

The enzyme catalyses a lipid X + a UDP-2-N,3-O-bis[(3R)-3-hydroxyacyl]-alpha-D-glucosamine = a lipid A disaccharide + UDP + H(+). Its pathway is bacterial outer membrane biogenesis; LPS lipid A biosynthesis. Condensation of UDP-2,3-diacylglucosamine and 2,3-diacylglucosamine-1-phosphate to form lipid A disaccharide, a precursor of lipid A, a phosphorylated glycolipid that anchors the lipopolysaccharide to the outer membrane of the cell. This chain is Lipid-A-disaccharide synthase, found in Rhodopseudomonas palustris (strain ATCC BAA-98 / CGA009).